We begin with the raw amino-acid sequence, 184 residues long: Ribosome-recycling factor (184 aa).

This sequence belongs to the RRF family.

The protein resides in the cytoplasm. In terms of biological role, responsible for the release of ribosomes from messenger RNA at the termination of protein biosynthesis. May increase the efficiency of translation by recycling ribosomes from one round of translation to another. The chain is Ribosome-recycling factor from Clostridium botulinum (strain Okra / Type B1).